The sequence spans 395 residues: S-adenosylmethionine synthase (395 aa).

Histidine 12 is a binding site for ATP. Residue aspartate 14 participates in Mg(2+) binding. Glutamate 40 is a K(+) binding site. L-methionine-binding residues include glutamate 53 and glutamine 96. The segment at 96–106 is flexible loop; it reads QSKEIADAVNF. ATP-binding positions include 174–176, 242–243, aspartate 251, 257–258, alanine 274, and lysine 278; these read DGK, RF, and RK. Aspartate 251 contacts L-methionine. Lysine 282 is a binding site for L-methionine.

It belongs to the AdoMet synthase family. Homotetramer; dimer of dimers. Mg(2+) is required as a cofactor. K(+) serves as cofactor.

Its subcellular location is the cytoplasm. The catalysed reaction is L-methionine + ATP + H2O = S-adenosyl-L-methionine + phosphate + diphosphate. Its pathway is amino-acid biosynthesis; S-adenosyl-L-methionine biosynthesis; S-adenosyl-L-methionine from L-methionine: step 1/1. Its function is as follows. Catalyzes the formation of S-adenosylmethionine (AdoMet) from methionine and ATP. The overall synthetic reaction is composed of two sequential steps, AdoMet formation and the subsequent tripolyphosphate hydrolysis which occurs prior to release of AdoMet from the enzyme. In Tropheryma whipplei (strain TW08/27) (Whipple's bacillus), this protein is S-adenosylmethionine synthase.